Here is a 765-residue protein sequence, read N- to C-terminus: Beta-glucosidase cel3A (765 aa).

A signal peptide spans 1–24 (MRWSSPTSSSLSLVALLLVAHVDA). 10 N-linked (GlcNAc...) asparagine glycosylation sites follow: asparagine 66, asparagine 124, asparagine 250, asparagine 304, asparagine 311, asparagine 349, asparagine 549, asparagine 588, asparagine 657, and asparagine 681.

Belongs to the glycosyl hydrolase 3 family.

It is found in the secreted. The catalysed reaction is Hydrolysis of terminal, non-reducing beta-D-glucosyl residues with release of beta-D-glucose.. It participates in glycan metabolism; cellulose degradation. Functionally, beta-glucosidases are one of a number of cellulolytic enzymes involved in the degradation of cellulosic biomass. Catalyzes the last step releasing glucose from the inhibitory cellobiose. Shows higher activities on cellobiose and cellotriose but lower activities on laminarioligosaccharides and polymers. In Pyricularia oryzae (strain 70-15 / ATCC MYA-4617 / FGSC 8958) (Rice blast fungus), this protein is Beta-glucosidase cel3A.